The following is a 120-amino-acid chain: MEIGVDIVDLDRIEKAYNRYGVKFLQRFLSEEEITLCLQKPQVIASIAGRFAAKEAVVKALGTGFSSGVHWKSFAILNDKQGRPFVQPADAGCFPACGAIKISIAHDRHAAIATALIEWV.

The Mg(2+) site is built by Asp6 and Glu55.

This sequence belongs to the P-Pant transferase superfamily. AcpS family. Requires Mg(2+) as cofactor.

Its subcellular location is the cytoplasm. The enzyme catalyses apo-[ACP] + CoA = holo-[ACP] + adenosine 3',5'-bisphosphate + H(+). Its function is as follows. Transfers the 4'-phosphopantetheine moiety from coenzyme A to a Ser of acyl-carrier-protein. This Pelodictyon phaeoclathratiforme (strain DSM 5477 / BU-1) protein is Holo-[acyl-carrier-protein] synthase.